The sequence spans 918 residues: Importin subunit beta-2 (918 aa).

HEAT repeat units lie at residues 11-38 (YVLQ…EAME), 43-92 (QPEF…GGNN), 103-137 (YVKS…TYYR), 145-181 (GLQM…FQLE), 190-222 (EALL…TVIP), 235-263 (FLEI…SFLL), 275-303 (DGIV…FLHA), 320-413 (KDIV…MTNI), 421-449 (IAFP…GAMA), 461-488 (PALI…TLSR), 501-534 (LIPV…IENA), 542-577 (LFYS…AEKC), 583-620 (AMQI…SSLG), 628-678 (PEVY…GLGA), 694-725 (ILKI…YFFN), 777-814 (IDMS…LTHP), 825-858 (DSNW…INLT), and 867-900 (DTIH…SAQI). The tract at residues 361–395 (APRIVKKKEAGNGEDADDNEDDDDDDDDEDGDVDT) is disordered. A compositionally biased stretch (acidic residues) spans 372-393 (NGEDADDNEDDDDDDDDEDGDV).

The protein belongs to the importin beta family. Importin beta-2 subfamily. As to quaternary structure, interacts with Ran (GSP1); interacts specifically with the GTP-bound form of Ran (GTP-Ran), protecting it from GTP hydrolysis and nucleotide exchange. Interacts with nucleoporins NUP1, NUP100 and NUP116. Interacts with NAB2 and HRP1/NAB4; via their rg-NLS. Interacts with TFG2; via its PY-NLS.

It is found in the cytoplasm. It localises to the nucleus. Its subcellular location is the nuclear pore complex. Functionally, functions in nuclear protein import as nuclear transport receptor. Serves as receptor for arginine/glycine-rich nuclear localization signals (rg-NLS) and PY-NLS in cargo substrates. Its predominant cargo substrate seems to be mRNA-binding proteins. Required for nuclear transport of NAB2, HRP1/NAB4 and TFG2. Mediates docking of the importin/substrate complex to the nuclear pore complex (NPC) through binding to repeat-containing nucleoporins. The complex is subsequently translocated through the pore by an energy requiring, Ran-dependent mechanism. At the nucleoplasmic side of the NPC, GTP-Ran binding leads to release of the cargo. Efficient GTP-Ran-mediated substrate release requires RNA. The importin is re-exported from the nucleus to the cytoplasm where GTP hydrolysis releases Ran from importin. The directionality of nuclear import is thought to be conferred by an asymmetric distribution of the GTP- and GDP-bound forms of Ran between the cytoplasm and nucleus. This Saccharomyces cerevisiae (strain ATCC 204508 / S288c) (Baker's yeast) protein is Importin subunit beta-2.